The following is a 318-amino-acid chain: Ferric enterobactin-binding periplasmic protein FepB (318 aa).

The signal sequence occupies residues 1–26 (MRLAPLYRNALLLTGLLLSGIAAVQA). The Fe/B12 periplasmic-binding domain occupies 48 to 318 (RIVSTSVTLT…QVLDRLKALF (271 aa)).

The protein belongs to the bacterial solute-binding protein 8 family. The complex is composed of two ATP-binding proteins (FepC), two transmembrane proteins (FepD and FepG) and a solute-binding protein (FepB).

It localises to the periplasm. In terms of biological role, part of the ABC transporter complex FepBDGC involved in ferric enterobactin uptake. Binds ferric enterobactin. The sequence is that of Ferric enterobactin-binding periplasmic protein FepB (fepB) from Escherichia coli O6:H1 (strain CFT073 / ATCC 700928 / UPEC).